The primary structure comprises 309 residues: Taste receptor type 2 member 31 (309 aa).

The Extracellular portion of the chain corresponds to 1 to 2; it reads MT. The helical transmembrane segment at 3–23 threads the bilayer; the sequence is TFIPIIFSSLVMVMFVTGNFA. The Cytoplasmic portion of the chain corresponds to 24 to 55; it reads NGFIALVNSIESVKRQKISYADQILTALAVSR. A helical transmembrane segment spans residues 56–76; it reads IGLLWVLLLNWYSTVLNPAFY. Residues 77 to 100 are Extracellular-facing; sequence SVEVRTTAYNVWAVTGHFSNWLAT. The chain crosses the membrane as a helical span at residues 101–121; the sequence is SLSIFYLLKIANFSNLIFLHL. The Cytoplasmic segment spans residues 122-126; it reads KRRVK. Residues 127-147 form a helical membrane-spanning segment; that stretch reads SVILVMLLGPLLFLACQLFVI. The Extracellular portion of the chain corresponds to 148–181; the sequence is NMKEIVQTKEYEGNXTWKIKLRSAVYLSDATVTT. Residue asparagine 161 is glycosylated (N-linked (GlcNAc...) asparagine). A helical transmembrane segment spans residues 182–202; it reads LGNLVPFTLTLLCFLLLICSL. Residues 203–229 are Cytoplasmic-facing; that stretch reads CKHLKKMQLHGKGSQDPSMKVHIKALQ. A helical transmembrane segment spans residues 230–250; that stretch reads TVTSFLLLCAIYFLSIMISVW. Residues 251-259 lie on the Extracellular side of the membrane; sequence SLGSLKNKP. Residues 260–280 form a helical membrane-spanning segment; that stretch reads VFMFCKAMRFSYPSIHPFILI. The Cytoplasmic segment spans residues 281–309; the sequence is WGNKKLKQTFLSVLQQVRYWVKGEKPSSP.

The protein belongs to the G-protein coupled receptor T2R family.

It localises to the membrane. Functionally, receptor that may play a role in the perception of bitterness and is gustducin-linked. May play a role in sensing the chemical composition of the gastrointestinal content. The activity of this receptor may stimulate alpha gustducin, mediate PLC-beta-2 activation and lead to the gating of TRPM5. The chain is Taste receptor type 2 member 31 (TAS2R31) from Gorilla gorilla gorilla (Western lowland gorilla).